The sequence spans 164 residues: Thiol peroxidase (164 aa).

One can recognise a Thioredoxin domain in the interval 16–162 (LQVGDIAKDF…YEAAINAAKI (147 aa)). Residue Cys-58 is the Cysteine sulfenic acid (-SOH) intermediate of the active site. A disulfide bridge links Cys-58 with Cys-92.

Belongs to the peroxiredoxin family. Tpx subfamily. In terms of assembly, homodimer.

The catalysed reaction is a hydroperoxide + [thioredoxin]-dithiol = an alcohol + [thioredoxin]-disulfide + H2O. Its function is as follows. Thiol-specific peroxidase that catalyzes the reduction of hydrogen peroxide and organic hydroperoxides to water and alcohols, respectively. Plays a role in cell protection against oxidative stress by detoxifying peroxides. The sequence is that of Thiol peroxidase from Streptococcus agalactiae serotype III (strain NEM316).